Reading from the N-terminus, the 532-residue chain is Telomerase Cajal body protein 1 (532 aa).

Residues 1 to 48 (MKTSEELRLAPDSLPSDLVPAPVLQASPADKNTDSEPVPPPCGGDDQL) are disordered. 3 positions are modified to phosphoserine: serine 27, serine 61, and serine 83. The disordered stretch occupies residues 83-115 (SPRIEEQEVPENASLPVEETNRPELESGEAMEG). WD repeat units follow at residues 151–190 (RSEN…YSES), 206–251 (EGDT…LRAS), 256–297 (NHLD…RDCE), 307–348 (GQSG…ALLG), 349–389 (GHQG…HLLW), and 395–434 (VTTN…SDCK). Threonine 474 bears the Phosphothreonine mark. The residue at position 476 (serine 476) is a Phosphoserine. Positions 505-532 (CGGGPDPSNPDEDQDEKGQGRTEAVGMS) are disordered.

It belongs to the TCAB1 family. In terms of assembly, component of the telomerase holoenzyme complex composed of one molecule of TERT, one molecule of WRAP53/TCAB1, two molecules of H/ACA ribonucleoprotein complex subunits DKC1, NOP10, NHP2 and GAR1, and a telomerase RNA template component (TERC). The telomerase holoenzyme complex is associated with TEP1, SMG6/EST1A and POT1. Interacts with the chaperonin-containing T-complex (TRiC) complex; which mediates the folding of WRAP53/TCAB1. Interacts with COIL. Interacts with SMN1. Interacts with RNF8. Interacts with histone H2AX. Post-translationally, phosphorylated at Ser-61 by ATM in response to DNA damage, promoting its interaction with histone H2AX and localization to sites of DNA double-strand breaks.

Its subcellular location is the nucleus. It is found in the cajal body. The protein localises to the chromosome. The protein resides in the telomere. RNA chaperone that plays a key role in telomere maintenance and RNA localization to Cajal bodies. Specifically recognizes and binds the Cajal body box (CAB box) present in both small Cajal body RNAs (scaRNAs) and telomerase RNA template component (TERC). Essential component of the telomerase holoenzyme complex, a ribonucleoprotein complex essential for the replication of chromosome termini that elongates telomeres in most eukaryotes. In the telomerase holoenzyme complex, required to stimulate the catalytic activity of the complex. Acts by specifically binding the CAB box of the TERC RNA and controlling the folding of the CR4/CR5 region of the TERC RNA, a critical step for telomerase activity. In addition, also controls telomerase holoenzyme complex localization to Cajal body. During S phase, required for delivery of TERC to telomeres during S phase and for telomerase activity. In addition to its role in telomere maintenance, also required for Cajal body formation, probably by mediating localization of scaRNAs to Cajal bodies. Also plays a role in DNA repair: phosphorylated by ATM in response to DNA damage and relocalizes to sites of DNA double-strand breaks to promote the repair of DNA double-strand breaks. Acts by recruiting the ubiquitin ligase RNF8 to DNA breaks and promote both homologous recombination (HR) and non-homologous end joining (NHEJ). This chain is Telomerase Cajal body protein 1, found in Rattus norvegicus (Rat).